The primary structure comprises 261 residues: Lipase LipV (261 aa).

Serine 87 functions as the Nucleophile in the catalytic mechanism. Catalysis depends on charge relay system residues aspartate 217 and histidine 240.

It belongs to the AB hydrolase superfamily.

It catalyses the reaction a carboxylic ester + H2O = an alcohol + a carboxylate + H(+). The catalysed reaction is a tetradecanoate ester + H2O = an aliphatic alcohol + tetradecanoate + H(+). It carries out the reaction decanoate ester + H2O = decanoate + an aliphatic alcohol + H(+). The enzyme catalyses an octanoate ester + H2O = an aliphatic alcohol + octanoate + H(+). It catalyses the reaction a dodecanoate ester + H2O = an aliphatic alcohol + dodecanoate + H(+). The catalysed reaction is a butanoate ester + H2O = an aliphatic alcohol + butanoate + H(+). It carries out the reaction hexadecanoate ester + H2O = an aliphatic alcohol + hexadecanoate + H(+). The enzyme catalyses octadecanoate ester + H2O = an aliphatic alcohol + octadecanoate + H(+). Is inhibited by tetrahydrolipstatin, a specific lipase inhibitor and RHC 80267, a diacylglycerol lipase inhibitor, but not by phenylglyoxal and iodoacetate. Its function is as follows. Lipase that displays broad substrate specificity and preferentially hydrolyzes p-nitrophenyl myristate in vitro. Also shows significant activity with pNP-butyrate (68%), pNP-octanoate (82%), pNP-decanoate (90%), and pNP-laurate (74%). Is probably involved in lipid catabolism. Is active at low pH, and might play some important role in mycobacterial biology in macrophages where the bacteria encounters acidic stress. The protein is Lipase LipV of Mycobacterium tuberculosis (strain ATCC 25618 / H37Rv).